Here is a 512-residue protein sequence, read N- to C-terminus: Kynurenine 3-monooxygenase (512 aa).

Belongs to the aromatic-ring hydroxylase family. KMO subfamily. Requires FAD as cofactor.

It localises to the mitochondrion outer membrane. The enzyme catalyses L-kynurenine + NADPH + O2 + H(+) = 3-hydroxy-L-kynurenine + NADP(+) + H2O. The protein operates within cofactor biosynthesis; NAD(+) biosynthesis; quinolinate from L-kynurenine: step 1/3. Its function is as follows. Catalyzes the hydroxylation of L-kynurenine (L-Kyn) to form 3-hydroxy-L-kynurenine (L-3OHKyn). Required for synthesis of quinolinic acid. The protein is Kynurenine 3-monooxygenase (bna4) of Aspergillus fumigatus (strain ATCC MYA-4609 / CBS 101355 / FGSC A1100 / Af293) (Neosartorya fumigata).